We begin with the raw amino-acid sequence, 208 residues long: Uracil phosphoribosyltransferase (208 aa).

5-phospho-alpha-D-ribose 1-diphosphate is bound by residues Arg78, Arg103, and 130 to 138 (DPMLATGGS). Residues Ile193 and 198 to 200 (GDA) contribute to the uracil site. Asp199 lines the 5-phospho-alpha-D-ribose 1-diphosphate pocket.

Belongs to the UPRTase family. The cofactor is Mg(2+).

It catalyses the reaction UMP + diphosphate = 5-phospho-alpha-D-ribose 1-diphosphate + uracil. It functions in the pathway pyrimidine metabolism; UMP biosynthesis via salvage pathway; UMP from uracil: step 1/1. Allosterically activated by GTP. Functionally, catalyzes the conversion of uracil and 5-phospho-alpha-D-ribose 1-diphosphate (PRPP) to UMP and diphosphate. The chain is Uracil phosphoribosyltransferase from Klebsiella pneumoniae subsp. pneumoniae (strain ATCC 700721 / MGH 78578).